We begin with the raw amino-acid sequence, 425 residues long: Serine--tRNA ligase (425 aa).

Residue 232 to 234 (TSE) coordinates L-serine. Residues 263-265 (RRE) and V279 contribute to the ATP site. Position 286 (E286) interacts with L-serine. Residue 350 to 353 (EVVS) participates in ATP binding. T387 contacts L-serine.

Belongs to the class-II aminoacyl-tRNA synthetase family. Type-1 seryl-tRNA synthetase subfamily. In terms of assembly, homodimer. The tRNA molecule binds across the dimer.

It is found in the cytoplasm. The catalysed reaction is tRNA(Ser) + L-serine + ATP = L-seryl-tRNA(Ser) + AMP + diphosphate + H(+). The enzyme catalyses tRNA(Sec) + L-serine + ATP = L-seryl-tRNA(Sec) + AMP + diphosphate + H(+). Its pathway is aminoacyl-tRNA biosynthesis; selenocysteinyl-tRNA(Sec) biosynthesis; L-seryl-tRNA(Sec) from L-serine and tRNA(Sec): step 1/1. Catalyzes the attachment of serine to tRNA(Ser). Is also able to aminoacylate tRNA(Sec) with serine, to form the misacylated tRNA L-seryl-tRNA(Sec), which will be further converted into selenocysteinyl-tRNA(Sec). The protein is Serine--tRNA ligase of Methanospirillum hungatei JF-1 (strain ATCC 27890 / DSM 864 / NBRC 100397 / JF-1).